The chain runs to 329 residues: Putative helicase 109L (329 aa).

The region spanning 105-259 (LTLLTQHKSC…LFDMFFGPEM (155 aa)) is the Helicase ATP-binding domain. 118–125 (CYTGFGKT) serves as a coordination point for ATP. Positions 212-215 (DEAH) match the DEAH box motif.

It belongs to the DEAD box helicase family. DEAH subfamily.

This is Putative helicase 109L from Invertebrate iridescent virus 3 (IIV-3).